The primary structure comprises 359 residues: Probable NAD(P)H nitroreductase PigM (359 aa).

The protein belongs to the nitroreductase family. Requires FMN as cofactor.

The protein operates within antibiotic biosynthesis; prodigiosin biosynthesis. Its function is as follows. Involved in the biosynthesis of 4-methoxy-2,2'-bipyrrole-5-carbaldehyde (MBC), one of the terminal products involved in the biosynthesis of the red antibiotic prodigiosin (Pig). Catalyzes the oxidation of the hydroxy group of 4-hydroxy-2,2'-bipyrrole-5-methanol (HBM) to yield 4-methoxy-2,2'-bipyrrole-5-carbaldehyde (MBC). This Serratia sp. (strain ATCC 39006) (Prodigiosinella confusarubida) protein is Probable NAD(P)H nitroreductase PigM.